We begin with the raw amino-acid sequence, 460 residues long: CCA-adding enzyme (460 aa).

2 residues coordinate ATP: Ser-50 and Arg-53. Positions 50 and 53 each coordinate CTP. 3 residues coordinate Mg(2+): Asp-62, Asp-64, and Asp-117. His-140, Lys-159, and Tyr-168 together coordinate ATP. Residues His-140, Lys-159, and Tyr-168 each coordinate CTP.

The protein belongs to the tRNA nucleotidyltransferase/poly(A) polymerase family. Archaeal CCA-adding enzyme subfamily. Homodimer. It depends on Mg(2+) as a cofactor.

The catalysed reaction is a tRNA precursor + 2 CTP + ATP = a tRNA with a 3' CCA end + 3 diphosphate. The enzyme catalyses a tRNA with a 3' CCA end + 2 CTP + ATP = a tRNA with a 3' CCACCA end + 3 diphosphate. Functionally, catalyzes the addition and repair of the essential 3'-terminal CCA sequence in tRNAs without using a nucleic acid template. Adds these three nucleotides in the order of C, C, and A to the tRNA nucleotide-73, using CTP and ATP as substrates and producing inorganic pyrophosphate. tRNA 3'-terminal CCA addition is required both for tRNA processing and repair. Also involved in tRNA surveillance by mediating tandem CCA addition to generate a CCACCA at the 3' terminus of unstable tRNAs. While stable tRNAs receive only 3'-terminal CCA, unstable tRNAs are marked with CCACCA and rapidly degraded. This chain is CCA-adding enzyme, found in Methanoregula boonei (strain DSM 21154 / JCM 14090 / 6A8).